Here is a 557-residue protein sequence, read N- to C-terminus: Acid-sensing ion channel 1B (557 aa).

Residues 1–98 (MVRITCTISF…SIRQGLWALV (98 aa)) are Cytoplasmic-facing. Over residues 36 to 45 (KDGEQGKYQE) the composition is skewed to basic and acidic residues. The interval 36–57 (KDGEQGKYQEEGDDPDAYDGPE) is disordered. Acidic residues predominate over residues 46-57 (EGDDPDAYDGPE). Residues 99–115 (FLLAISMFLLQVVDRVI) form a helical membrane-spanning segment. Residues 116-460 (YYLQYDYVTL…ETIEQKKAYE (345 aa)) are Extracellular-facing. N-linked (GlcNAc...) asparagine glycosylation is found at Asn133 and Asn194. Intrachain disulfides connect Cys142-Cys229, Cys207-Cys214, Cys325-Cys400, Cys343-Cys396, Cys347-Cys394, Cys356-Cys378, and Cys358-Cys370. Residues Asn401 and Asn428 are each glycosylated (N-linked (GlcNAc...) asparagine). A discontinuously helical membrane pass occupies residues 461-491 (LAGLLGDIGGQMGLFIGASILTILELFDYLY). A GAS motif; ion selectivity filter motif is present at residues 477–479 (GAS). Topologically, residues 492-557 (EVIKFKLCRC…GQGNFEDFTC (66 aa)) are cytoplasmic.

The protein belongs to the amiloride-sensitive sodium channel (TC 1.A.6) family. ASIC1 subfamily. As to quaternary structure, homotrimer. Heterotrimer; with other ASIC proteins producing channel with different properties. As to expression, expressed in central nervous system.

It localises to the cell membrane. Its subcellular location is the postsynaptic cell membrane. The protein resides in the cell projection. It is found in the dendrite. The enzyme catalyses Na(+)(in) = Na(+)(out). The catalysed reaction is K(+)(in) = K(+)(out). It catalyses the reaction Li(+)(in) = Li(+)(out). It carries out the reaction Ca(2+)(in) = Ca(2+)(out). Its activity is regulated as follows. Inhibited by the diuretic drug amiloride. In terms of biological role, forms voltage-independent, pH-gated trimeric sodium channels that act as postsynaptic excitatory receptors in the nervous system, playing a crucial role in regulating synaptic plasticity, learning, and memory. Upon extracellular pH drop this channel elicits transient, fast activating, and completely desensitizing inward currents. Displays high selectivity for sodium ions but can also permit the permeation of other cations. This chain is Acid-sensing ion channel 1B (asic1b), found in Danio rerio (Zebrafish).